The chain runs to 360 residues: UDP-N-acetylglucosamine--N-acetylmuramyl-(pentapeptide) pyrophosphoryl-undecaprenol N-acetylglucosamine transferase (360 aa).

UDP-N-acetyl-alpha-D-glucosamine-binding positions include 12 to 14, serine 198, and glutamine 289; that span reads TAG.

This sequence belongs to the glycosyltransferase 28 family. MurG subfamily.

It localises to the cell membrane. It carries out the reaction Mur2Ac(oyl-L-Ala-gamma-D-Glu-L-Lys-D-Ala-D-Ala)-di-trans,octa-cis-undecaprenyl diphosphate + UDP-N-acetyl-alpha-D-glucosamine = beta-D-GlcNAc-(1-&gt;4)-Mur2Ac(oyl-L-Ala-gamma-D-Glu-L-Lys-D-Ala-D-Ala)-di-trans,octa-cis-undecaprenyl diphosphate + UDP + H(+). Its pathway is cell wall biogenesis; peptidoglycan biosynthesis. Cell wall formation. Catalyzes the transfer of a GlcNAc subunit on undecaprenyl-pyrophosphoryl-MurNAc-pentapeptide (lipid intermediate I) to form undecaprenyl-pyrophosphoryl-MurNAc-(pentapeptide)GlcNAc (lipid intermediate II). This Streptococcus equi subsp. zooepidemicus (strain H70) protein is UDP-N-acetylglucosamine--N-acetylmuramyl-(pentapeptide) pyrophosphoryl-undecaprenol N-acetylglucosamine transferase.